A 160-amino-acid polypeptide reads, in one-letter code: Small ribosomal subunit protein bS6 (160 aa).

The protein belongs to the bacterial ribosomal protein bS6 family.

Its function is as follows. Binds together with bS18 to 16S ribosomal RNA. This chain is Small ribosomal subunit protein bS6, found in Ureaplasma urealyticum serovar 10 (strain ATCC 33699 / Western).